A 321-amino-acid chain; its full sequence is MKDNTVPLKLIALLANGEFHSGEQLGETLGMSRAAINKHIQTLRDWGVDVFTVPGKGYSLPEPIQLLNAKQILGQLDGGSVAVLPVIDSTNQYLLDRIGELKSGDACIAEYQQAGRGRRGRKWFSPFGANLYLSMFWRLEQGPAAAIGLSLVIGIVMAEVLRKLGADKVRVKWPNDLYLQDRKLAGILVELTGKTGDAAQIVIGAGINMAMRRVEESVVNQGWITLQEAGINLDRNTLAAMLIRELRAALELFEQEGLAPYLSRWEKLDNFINRPVKLIIGDKEIFGISRGIDKQGALLLEQDGIIKPWMGGEISLRSAEK.

The segment at residues 22 to 41 is a DNA-binding region (H-T-H motif); the sequence is GEQLGETLGMSRAAINKHIQ. The region spanning 67–254 is the BPL/LPL catalytic domain; it reads LNAKQILGQL…ELRAALELFE (188 aa). Residues 89-91, Gln-112, 116-118, and Lys-183 contribute to the biotin site; these read STN and RGR.

Belongs to the biotin--protein ligase family. As to quaternary structure, monomer in solution. Interacts with BCCP. Homodimerizes to bind DNA. Interaction with the corepressor bio-5'-AMP increases dimerization.

The enzyme catalyses biotin + L-lysyl-[protein] + ATP = N(6)-biotinyl-L-lysyl-[protein] + AMP + diphosphate + H(+). Its activity is regulated as follows. The switch between the enzymatic activity and the repressor activity is regulated by cellular demand for biotin. The switch occurs by swapping of protein interaction partners by holoBirA. In conditions of high biotin demand, holoBirA associates with apoBCCP to transfer biotin. In conditions of low biotin demand, holoBirA dimerizes, binds DNA and represses transcription of the biotin operon. In terms of biological role, acts both as a biotin--[acetyl-CoA-carboxylase] ligase and a biotin-operon repressor. In the presence of ATP, BirA activates biotin to form the BirA-biotinyl-5'-adenylate (BirA-bio-5'-AMP or holoBirA) complex. HoloBirA can either transfer the biotinyl moiety to the biotin carboxyl carrier protein (BCCP) subunit of acetyl-CoA carboxylase, or bind to the biotin operator site and inhibit transcription of the operon. This chain is Bifunctional ligase/repressor BirA, found in Escherichia coli (strain K12).